We begin with the raw amino-acid sequence, 1159 residues long: Cation channel sperm-associated auxiliary subunit gamma (1159 aa).

The N-terminal stretch at 1 to 35 (MCGPAMFPAGPRWPRVRVLQVLWALLAVLLASRRL) is a signal peptide. The Extracellular portion of the chain corresponds to 36 to 1065 (WAIKDFEECT…IHGLPLSPKR (1030 aa)). Disulfide bonds link cysteine 44/cysteine 105 and cysteine 159/cysteine 165. N-linked (GlcNAc...) asparagine glycosylation occurs at asparagine 102. An N-linked (GlcNAc...) asparagine glycan is attached at asparagine 177. A disulfide bond links cysteine 288 and cysteine 343. Asparagine 355 is a glycosylation site (N-linked (GlcNAc...) asparagine). The cysteines at positions 394 and 402 are disulfide-linked. N-linked (GlcNAc...) asparagine glycans are attached at residues asparagine 426 and asparagine 574. 5 disulfides stabilise this stretch: cysteine 638–cysteine 860, cysteine 806–cysteine 834, cysteine 882–cysteine 1046, cysteine 909–cysteine 918, and cysteine 1010–cysteine 1016. A helical transmembrane segment spans residues 1066 to 1087 (ALFILMVSLSVFVGLVIFYIAF). At 1088–1159 (CLLWPLVVKG…KEAVERQLMT (72 aa)) the chain is on the cytoplasmic side. The disordered stretch occupies residues 1138–1159 (FSSRMTEDKAEPKEAVERQLMT). Residues 1142–1159 (MTEDKAEPKEAVERQLMT) show a composition bias toward basic and acidic residues.

Belongs to the CATSPERG family. As to quaternary structure, component of the CatSper complex or CatSpermasome composed of the core pore-forming members CATSPER1, CATSPER2, CATSPER3 and CATSPER4 as well as auxiliary members CATSPERB, CATSPERG, CATSPERD, CATSPERE, CATSPERZ, SCLO6C1, TMEM249, TMEM262 and EFCAB9. HSPA1 may be an additional auxiliary complex member. The core complex members CATSPER1, CATSPER2, CATSPER3 and CATSPER4 form a heterotetrameric channel. The auxiliary CATSPERB, CATSPERG, CATSPERD and CATSPERE subunits form a pavilion-like structure over the pore which stabilizes the complex through interactions with CATSPER4, CATSPER3, CATSPER1 and CATSPER2 respectively. TMEM262/CATSPERH interacts with CATSPERB, further stabilizing the complex. C2CD6/CATSPERT interacts at least with CATSPERD and is required for targeting the CatSper complex in the flagellar membrane.

It localises to the cell projection. The protein resides in the cilium. Its subcellular location is the flagellum membrane. Its function is as follows. Auxiliary component of the CatSper complex, a complex involved in sperm cell hyperactivation. Sperm cell hyperactivation is needed for sperm motility which is essential late in the preparation of sperm for fertilization. This Macaca fascicularis (Crab-eating macaque) protein is Cation channel sperm-associated auxiliary subunit gamma.